Consider the following 721-residue polypeptide: bZIP transcription factor 17 (721 aa).

Disordered stretches follow at residues 1 to 51 and 87 to 232; these read MAEP…LMSD and QEQF…EKKR. The Cytoplasmic segment spans residues 1 to 366; that stretch reads MAEPITKEQP…KSEAKTKKVA (366 aa). Residues 9 to 25 show a composition bias toward pro residues; it reads QPPPPAPDPNSTYPPPS. Basic and acidic residues predominate over residues 125 to 141; sequence ESPRDSDDRCSGADHNL. A compositionally biased stretch (polar residues) spans 146-170; the sequence is PLSSQGSGNCGSDVSEATNESSPKS. Basic and acidic residues predominate over residues 204 to 216; that stretch reads DESRNSKYRRSGE. A bZIP domain is found at 228-288; sequence DEKKRARLMR…AENATLRQQL (61 aa). A basic motif region spans residues 230-261; that stretch reads KKRARLMRNRESAQLSRQRKKHYVEELEEKVR. A leucine-zipper region spans residues 267–274; the sequence is ITDLNGKI. The interval 337–359 is disordered; the sequence is PRLKPQNTLGTSKAKKSESKKSE. Residues 367 to 387 traverse the membrane as a helical segment; sequence SISFLGLLFCLFLFGALAPIV. The Lumenal portion of the chain corresponds to 388–721; the sequence is NVNYGGISGA…RSGAPHLVTT (334 aa). The span at 422 to 436 shows a compositional bias: polar residues; sequence TSRSGAGTGVSNSNG. The tract at residues 422–462 is disordered; that stretch reads TSRSGAGTGVSNSNGMHRGRDSDRGARKNISATESSVTPGN. 4 N-linked (GlcNAc...) asparagine glycosylation sites follow: Asn-450, Asn-462, Asn-609, and Asn-617. Residues 451–462 show a composition bias toward polar residues; the sequence is ISATESSVTPGN. The short motif at 627–630 is the RRIL cleavage motif element; the sequence is RRIL. 2 N-linked (GlcNAc...) asparagine glycosylation sites follow: Asn-643 and Asn-651.

Belongs to the bZIP family. Interacts with BZIP28.

Its subcellular location is the endoplasmic reticulum membrane. It is found in the golgi apparatus membrane. The protein localises to the nucleus. In terms of biological role, transcriptional activator involved in salt and osmotic stress responses. Functions as a stress sensor and transducer in a signaling pathway that resembles an ER stress response. Following salt stress, BZIP17 is cleaved by SBT6.1 (S1P) and S2P at the C-terminus and the N-terminal bZIP component is translocated to the nucleus, where it activates the expression of salt stress response genes. Functions as a stress sensor and transducer in ER stress signaling pathway. ER stress induces proteolysis of BZIP17 by SBT6.1 (S1P) and S2P, and the N-terminal bZIP component is translocated to the nucleus, where it activates the expression and production of ER chaperones, as well as protein involved in brassinosteroid (BR) signaling, which is required for stress acclimation and growth. This Arabidopsis thaliana (Mouse-ear cress) protein is bZIP transcription factor 17.